The primary structure comprises 232 residues: MTKHGKRIRGILKSYDFSKSYSLQEAIDILKQCPTVRFDQTVDVSIKLGIDPKKSDQQIRGSVSLPNGTGKTLKILVFAAGEKAKEALDAGADFVGSDDLVERIKGGWVDFDVAVATPDMMREVGKLGKVLGPRNLMPTPKAGTVTMDVTKAIAELRKGKIEFKADRAGVCNAGVGKLSFDRNLLKENIEALCSALIKAKPPAAKGQYLVSFTVSSTMGPGISVDTRELMAS.

This sequence belongs to the universal ribosomal protein uL1 family. Part of the 50S ribosomal subunit.

In terms of biological role, binds directly to 23S rRNA. The L1 stalk is quite mobile in the ribosome, and is involved in E site tRNA release. Its function is as follows. Protein L1 is also a translational repressor protein, it controls the translation of the L11 operon by binding to its mRNA. This Chlamydia caviae (strain ATCC VR-813 / DSM 19441 / 03DC25 / GPIC) (Chlamydophila caviae) protein is Large ribosomal subunit protein uL1.